A 548-amino-acid polypeptide reads, in one-letter code: Solute carrier family 22 member 7 (548 aa).

The next 12 membrane-spanning stretches (helical) occupy residues 21–41 (VALL…PIFL), 146–166 (AAST…GYLS), 180–200 (VSTL…MFAI), 204–224 (LTGS…LEWL), 234–254 (VLSS…GYLI), 259–279 (WLLL…WWVP), 346–366 (ISLC…GLSL), 376–397 (YQTQ…YLSV), 404–423 (LTQA…RLLV), 432–452 (TVLA…AYLF), 466–486 (MGLT…AALL), and 493–513 (LPKL…LLLP). Positions 522–548 (ETIQDVERKSAPTSLQEEEMPMKQVQN) are disordered.

Belongs to the major facilitator (TC 2.A.1) superfamily. Organic cation transporter (TC 2.A.1.19) family.

It localises to the basolateral cell membrane. It is found in the apical cell membrane. The protein resides in the cell membrane. The catalysed reaction is orotate(out) + L-glutamate(in) = orotate(in) + L-glutamate(out). The enzyme catalyses 3',5'-cyclic GMP(in) = 3',5'-cyclic GMP(out). It carries out the reaction GMP(in) = GMP(out). It catalyses the reaction 2'-deoxyguanosine(in) = 2'-deoxyguanosine(out). The catalysed reaction is GDP(in) = GDP(out). The enzyme catalyses guanosine(in) = guanosine(out). It carries out the reaction GTP(in) = GTP(out). It catalyses the reaction 3',5'-cyclic AMP(in) = 3',5'-cyclic AMP(out). The catalysed reaction is creatinine(in) = creatinine(out). The enzyme catalyses prostaglandin E2(out) = prostaglandin E2(in). It carries out the reaction 2-oxoglutarate(in) = 2-oxoglutarate(out). It catalyses the reaction glutarate(in) = glutarate(out). The catalysed reaction is urate(out) = urate(in). The enzyme catalyses estrone 3-sulfate(out) = estrone 3-sulfate(in). Functions as a Na(+)-independent bidirectional multispecific transporter. Contributes to the renal and hepatic elimination of endogenous organic compounds from the systemic circulation into the urine and bile, respectively. Capable of transporting a wide range of purine and pyrimidine nucleobases, nucleosides and nucleotides, with cGMP, 2'deoxyguanosine and GMP being the preferred substrates. Functions as a pH- and chloride-independent cGMP bidirectional facilitative transporter that can regulate both intracellular and extracellular levels of cGMP and may be involved in cGMP signaling pathways. Mediates orotate/glutamate bidirectional exchange and most likely display a physiological role in hepatic release of glutamate into the blood. Involved in renal secretion and possible reabsorption of creatinine. Able to uptake prostaglandin E2 (PGE2) and may contribute to PGE2 renal excretion. Also transports alpha-ketoglutarate and urate. Apart from the orotate/glutamate exchange, the counterions for the uptake of other SLC22A7/OAT2 substrates remain to be identified. The chain is Solute carrier family 22 member 7 (SLC22A7) from Pongo abelii (Sumatran orangutan).